The following is a 328-amino-acid chain: DNA-directed RNA polymerase subunit alpha (328 aa).

Residues 1–231 form an alpha N-terminal domain (alpha-NTD) region; sequence MIQQMQMPEK…DHVRLFSLFS (231 aa). The segment at 252–328 is alpha C-terminal domain (alpha-CTD); the sequence is MRKLLMTRIE…MEVTKYRLNQ (77 aa).

The protein belongs to the RNA polymerase alpha chain family. Homodimer. The RNAP catalytic core consists of 2 alpha, 1 beta, 1 beta' and 1 omega subunit. When a sigma factor is associated with the core the holoenzyme is formed, which can initiate transcription.

The enzyme catalyses RNA(n) + a ribonucleoside 5'-triphosphate = RNA(n+1) + diphosphate. In terms of biological role, DNA-dependent RNA polymerase catalyzes the transcription of DNA into RNA using the four ribonucleoside triphosphates as substrates. This chain is DNA-directed RNA polymerase subunit alpha, found in Chloroherpeton thalassium (strain ATCC 35110 / GB-78).